Here is a 149-residue protein sequence, read N- to C-terminus: Large ribosomal subunit protein uL24 (149 aa).

The segment at 114-149 (RKIIERSGGTPEVEAVPEKSEEEKEEKEKEEEKSEE) is disordered. Positions 129–149 (VPEKSEEEKEEKEKEEEKSEE) are enriched in basic and acidic residues.

Belongs to the universal ribosomal protein uL24 family. Part of the 50S ribosomal subunit.

One of two assembly initiator proteins, it binds directly to the 5'-end of the 23S rRNA, where it nucleates assembly of the 50S subunit. In terms of biological role, located at the polypeptide exit tunnel on the outside of the subunit. In Methanopyrus kandleri (strain AV19 / DSM 6324 / JCM 9639 / NBRC 100938), this protein is Large ribosomal subunit protein uL24.